We begin with the raw amino-acid sequence, 250 residues long: Kv channel-interacting protein 4 (250 aa).

The interval 2–44 (NVRRVESISAQLEEASSTGGFLYTQNSTKRSIKERLMKLLPCS) is KIS. Phosphoserine occurs at positions 17 and 56. Residues 61-117 (LEMATVRHRPEALELLEAQSKFTKKELQILYRGFKNECPSGVVNEDTFKEIYSQFFP) enclose the EF-hand 1; degenerate domain. EF-hand domains are found at residues 120-155 (DSTTYAHFLFNAFDTDHNGAVSFEDFIKGLSILLRG), 156-191 (TVQEKLNWAFNLYDINKDGYITKEEMLDIMKAIYDM), and 204-239 (APRQHVETFFQKMDKNKDGVVTIDEFIESCQKDENI). Ca(2+)-binding residues include Asp-133, Asp-135, Asn-137, Asp-144, Asp-169, Asn-171, Asp-173, Tyr-175, Glu-180, Asp-217, Asn-219, Asp-221, and Glu-228. Residues 237 to 250 (ENIMRSMQLFENVI) form an interaction with KCND2 region.

It belongs to the recoverin family. In terms of assembly, component of heteromultimeric potassium channels. Identified in potassium channel complexes containing KCND1, KCND2, KCND3, KCNIP1, KCNIP2, KCNIP3, KCNIP4, DPP6 and DPP10. Interacts with KCND2. Interacts with KCND3. Interacts with the C-terminus of PSEN2 and probably PSEN1.

It is found in the cell membrane. The protein localises to the cytoplasm. Its subcellular location is the peroxisome. Its function is as follows. Regulatory subunit of Kv4/D (Shal)-type voltage-gated rapidly inactivating A-type potassium channels. Modulates KCND2 channel density, inactivation kinetics and rate of recovery from inactivation in a calcium-dependent and isoform-specific manner. Modulates KCND3/Kv4.3 currents. Isoform 4 does not increase KCND2 expression at the cell membrane. Isoform 4 retains KCND3 in the endoplasmic reticulum and negatively regulates its expression at the cell membrane. This chain is Kv channel-interacting protein 4 (KCNIP4), found in Bos taurus (Bovine).